The chain runs to 448 residues: U1 small nuclear ribonucleoprotein 70 kDa (448 aa).

Positions 91–201 (TEIKNATEDP…GGGLGGTRRG (111 aa)) are required for interaction with U1 RNA. An RRM domain is found at 102-180 (RTLFIARINY…KRVLVDVERA (79 aa)). Residues 188-448 (PRRLGGGLGG…SSGDPSWWRQ (261 aa)) are disordered. The span at 191 to 200 (LGGGLGGTRR) shows a compositional bias: gly residues. 2 stretches are compositionally biased toward basic and acidic residues: residues 206-234 (NIKHSGREDNERERERYRLEREREDREGP) and 262-272 (ERRDRERDRGR). Positions 281 to 293 (SRSRSRERRKRRA) are enriched in basic residues. Basic and acidic residues-rich tracts occupy residues 294-320 (GSRERYDEFDRRDRRDRERERDRDRER) and 346-376 (RDRERGTGSGGDVKERKPDFRDMDVIKIKEE). Residues 405–425 (RPPPAHHNMFSVPPPPILGRG) form a mediates binding to Psi region. The segment covering 426–448 (NASTNPNPDNGQQSSGDPSWWRQ) has biased composition (polar residues).

Component of the U1 snRNP. Interacts with Psi; essential for alternative splicing of P-element transposase. Interacts with the SMN complex.

The protein resides in the nucleus speckle. It is found in the nucleus. It localises to the nucleoplasm. Functionally, mediates the splicing of pre-mRNA by binding to the stem loop I region of U1-snRNA. Required during oogenesis for nurse cell chromatin dispersal. The polypeptide is U1 small nuclear ribonucleoprotein 70 kDa (snRNP-U1-70K) (Drosophila melanogaster (Fruit fly)).